A 491-amino-acid chain; its full sequence is FAD-dependent monooxygenase idtM (491 aa).

Residues Glu34, Gly48, Arg107, Asp307, and Ala320 each coordinate FAD. Residues 448-468 form a helical membrane-spanning segment; that stretch reads ILSLVYVVAGLAMMYMSIYLV.

The protein belongs to the paxM FAD-dependent monooxygenase family. Requires FAD as cofactor.

The protein resides in the membrane. It functions in the pathway secondary metabolite biosynthesis. FAD-dependent monooxygenase; part of the gene cluster that mediates the biosynthesis of paspalitrems, indole-diterpene (IDT) mycotoxins that are potent tremorgens in mammals. The geranylgeranyl diphosphate (GGPP) synthase idtG is proposed to catalyze the first step in IDT biosynthesis via catalysis of a series of iterative condensations of isopentenyl diphosphate (IPP) with dimethylallyl diphosphate (DMAPP), geranyl diphosphate (GPP), and farnesyl diphosphate (FPP), to form GGPP. Condensation of indole-3-glycerol phosphate with GGPP by the prenyltransferase idtC then forms 3-geranylgeranylindole (3-GGI). Epoxidation of the two terminal alkenes of the geranylgeranyl moiety by the FAD-dependent monooxygenase idtM, and cyclization by the terpene cyclase idtB then leads to the production of paspaline. The cytochrome P450 monooxygenase idtP then catalyzes oxidative elimination of the pendant methyl group at C-12 of paspaline and generates the C-10 ketone to yield 13-desoxypaxilline. The cytochrome P450 monooxygenase idtQ may catalyze the C-13 oxidation of 13-desoxypaxilline to afford paxilline. Considering that both paspalicine and paxilline were detected in C.paspali, idtQ also catalyzes the formation of paspalinine from 13-desoxypaxilline via paspalicine as an intermediate. Finally, the alpha-prenyltransferase idtF prenylates paspalinine at the C-20 or the C-21 positions to yield paspalitrems A and C, respectively. The hydroxylation of paspalitrem A at C-32 by a still unknown oxidase affords paspalitrem B. This Claviceps paspali (Rye ergot fungus) protein is FAD-dependent monooxygenase idtM.